The chain runs to 362 residues: Heat-inducible transcription repressor HrcA (362 aa).

The protein belongs to the HrcA family.

Negative regulator of class I heat shock genes (grpE-dnaK-dnaJ and groELS operons). Prevents heat-shock induction of these operons. The chain is Heat-inducible transcription repressor HrcA from Rhodopseudomonas palustris (strain ATCC BAA-98 / CGA009).